The sequence spans 439 residues: Tubulin beta chain (439 aa).

8 residues coordinate GTP: Gln-11, Glu-69, Ser-138, Gly-142, Thr-143, Gly-144, Asn-204, and Asn-226. Residue Glu-69 participates in Mg(2+) binding.

It belongs to the tubulin family. As to quaternary structure, dimer of alpha and beta chains. A typical microtubule is a hollow water-filled tube with an outer diameter of 25 nm and an inner diameter of 15 nM. Alpha-beta heterodimers associate head-to-tail to form protofilaments running lengthwise along the microtubule wall with the beta-tubulin subunit facing the microtubule plus end conferring a structural polarity. Microtubules usually have 13 protofilaments but different protofilament numbers can be found in some organisms and specialized cells. The cofactor is Mg(2+).

It localises to the cytoplasm. The protein resides in the cytoskeleton. Its function is as follows. Tubulin is the major constituent of microtubules, a cylinder consisting of laterally associated linear protofilaments composed of alpha- and beta-tubulin heterodimers. Microtubules grow by the addition of GTP-tubulin dimers to the microtubule end, where a stabilizing cap forms. Below the cap, tubulin dimers are in GDP-bound state, owing to GTPase activity of alpha-tubulin. The chain is Tubulin beta chain (TUB2) from Encephalitozoon cuniculi (strain GB-M1) (Microsporidian parasite).